The chain runs to 546 residues: CTP synthase (546 aa).

The tract at residues 1 to 266 (MTTRYIFVTG…DELVVKRFSL (266 aa)) is amidoligase domain. Position 14 (S14) interacts with CTP. A UTP-binding site is contributed by S14. Residues 15–20 (SLGKGI) and D72 each bind ATP. Mg(2+) is bound by residues D72 and E140. CTP is bound by residues 147–149 (DIE), 187–192 (KTKPTQ), and K223. UTP contacts are provided by residues 187–192 (KTKPTQ) and K223. 239-241 (KDV) serves as a coordination point for ATP. A Glutamine amidotransferase type-1 domain is found at 291-542 (VIGMVGKYIE…VAAASAHQKR (252 aa)). L-glutamine is bound at residue G352. The Nucleophile; for glutamine hydrolysis role is filled by C379. Residues 380-383 (LGMQ), E403, and R470 each bind L-glutamine. Active-site residues include H515 and E517.

This sequence belongs to the CTP synthase family. Homotetramer.

The catalysed reaction is UTP + L-glutamine + ATP + H2O = CTP + L-glutamate + ADP + phosphate + 2 H(+). It catalyses the reaction L-glutamine + H2O = L-glutamate + NH4(+). It carries out the reaction UTP + NH4(+) + ATP = CTP + ADP + phosphate + 2 H(+). It participates in pyrimidine metabolism; CTP biosynthesis via de novo pathway; CTP from UDP: step 2/2. Allosterically activated by GTP, when glutamine is the substrate; GTP has no effect on the reaction when ammonia is the substrate. The allosteric effector GTP functions by stabilizing the protein conformation that binds the tetrahedral intermediate(s) formed during glutamine hydrolysis. Inhibited by the product CTP, via allosteric rather than competitive inhibition. In terms of biological role, catalyzes the ATP-dependent amination of UTP to CTP with either L-glutamine or ammonia as the source of nitrogen. Regulates intracellular CTP levels through interactions with the four ribonucleotide triphosphates. The polypeptide is CTP synthase (Shewanella oneidensis (strain ATCC 700550 / JCM 31522 / CIP 106686 / LMG 19005 / NCIMB 14063 / MR-1)).